The primary structure comprises 168 residues: Venom nerve growth factor (168 aa).

A signal peptide spans M1–A18. A propeptide spanning residues A19 to A123 is cleaved from the precursor. The N-linked (GlcNAc...) asparagine glycan is linked to N25. Positions L48 to G70 are disordered. N148 carries an N-linked (GlcNAc...) asparagine glycan.

The protein belongs to the NGF-beta family. In terms of assembly, homodimer; non-covalently linked. As to expression, expressed by the venom gland.

It is found in the secreted. Functionally, nerve growth factor is important for the development and maintenance of the sympathetic and sensory nervous systems. It stimulates division and differentiation of sympathetic and embryonic sensory neurons as well as basal forebrain cholinergic neurons in the brain. Its relevance in the snake venom is not clear. However, it has been shown to inhibit metalloproteinase-dependent proteolysis of platelet glycoprotein Ib alpha, suggesting a metalloproteinase inhibition to prevent metalloprotease autodigestion and/or protection against prey proteases. The chain is Venom nerve growth factor from Echis ocellatus (Ocellated saw-scaled viper).